The sequence spans 130 residues: kinetoplast-associated protein 2-1 (130 aa).

A propeptide spanning residues 1-10 (MLRRTVSNFA) is cleaved from the precursor. A disordered region spans residues 89–130 (LTKKWNETKQAQREKAQKAQKKTKSAKSKVKKAAKKSKKSKK). A compositionally biased stretch (basic and acidic residues) spans 92-105 (KWNETKQAQREKAQ). The segment covering 106 to 130 (KAQKKTKSAKSKVKKAAKKSKKSKK) has biased composition (basic residues).

The protein belongs to the KAP family. Associates with the kinetoplast DNA network.

The protein resides in the mitochondrion matrix. It is found in the kinetoplast. Histone H1-like DNA-binding protein involved in the organization and segregation of kinetoplast DNA (kDNA). The mitochondrial DNA of kinetoplastid protozoa consists of about 5,000 minicircles and 20 to 30 maxicircles. These circular DNAs are held together by catenation into a highly organized compact disk structure referred to as a kinetoplast DNA (kDNA) network. Binds preferentially to a specific fragment of minicircle DNA and is able to compact kDNA networks through DNA charge neutralization and condensation. The sequence is that of kinetoplast-associated protein 2-1 (KAP2-1) from Crithidia fasciculata.